We begin with the raw amino-acid sequence, 79 residues long: Conotoxin ArMKLT2-031 (79 aa).

The N-terminal stretch at 1 to 22 is a signal peptide; it reads MKLTCVLIIAVLFLTACQLTTG. Positions 23–46 are excised as a propeptide; that stretch reads ETYSRGEQKDHALRSTDKNSKLTR. Pyrrolidone carboxylic acid is present on Gln47. Intrachain disulfides connect Cys48-Cys62, Cys55-Cys66, and Cys61-Cys73.

This sequence belongs to the conotoxin O1 superfamily. As to expression, expressed by the venom duct.

Its subcellular location is the secreted. The chain is Conotoxin ArMKLT2-031 from Conus arenatus (Sand-dusted cone).